The chain runs to 273 residues: Nitrogenase iron protein (273 aa).

8 to 15 (GKGGIGKS) contacts ATP. Residue Cys-95 coordinates [4Fe-4S] cluster. Arg-98 is modified (ADP-ribosylarginine; by dinitrogenase reductase ADP-ribosyltransferase). Cys-130 lines the [4Fe-4S] cluster pocket.

Belongs to the NifH/BchL/ChlL family. Homodimer. [4Fe-4S] cluster serves as cofactor. The reversible ADP-ribosylation of Arg-98 inactivates the nitrogenase reductase and regulates nitrogenase activity.

The catalysed reaction is N2 + 8 reduced [2Fe-2S]-[ferredoxin] + 16 ATP + 16 H2O = H2 + 8 oxidized [2Fe-2S]-[ferredoxin] + 2 NH4(+) + 16 ADP + 16 phosphate + 6 H(+). Functionally, the key enzymatic reactions in nitrogen fixation are catalyzed by the nitrogenase complex, which has 2 components: the iron protein and the molybdenum-iron protein. This Roseiflexus castenholzii (strain DSM 13941 / HLO8) protein is Nitrogenase iron protein.